A 380-amino-acid polypeptide reads, in one-letter code: Epoxyqueuosine reductase (380 aa).

Aspartate 134 functions as the Proton donor in the catalytic mechanism. The region spanning 179–208 is the 4Fe-4S ferredoxin-type 1 domain; sequence PPDQPIEDQCGSCTKCIDICPTGALIQGGQ. 8 residues coordinate [4Fe-4S] cluster: cysteine 188, cysteine 191, cysteine 194, cysteine 198, cysteine 214, cysteine 240, cysteine 243, and cysteine 247. The 4Fe-4S ferredoxin-type 2 domain maps to 226–258; sequence PEEYRDKIGNRIYGCDTCQTVCPKNKGMDFHNH.

The protein belongs to the QueG family. In terms of assembly, monomer. It depends on cob(II)alamin as a cofactor. [4Fe-4S] cluster is required as a cofactor.

Its subcellular location is the cytoplasm. It carries out the reaction epoxyqueuosine(34) in tRNA + AH2 = queuosine(34) in tRNA + A + H2O. It functions in the pathway tRNA modification; tRNA-queuosine biosynthesis. Functionally, catalyzes the conversion of epoxyqueuosine (oQ) to queuosine (Q), which is a hypermodified base found in the wobble positions of tRNA(Asp), tRNA(Asn), tRNA(His) and tRNA(Tyr). The sequence is that of Epoxyqueuosine reductase from Bacillus anthracis.